A 203-amino-acid chain; its full sequence is Na(+)-translocating NADH-quinone reductase subunit E (203 aa).

The next 6 membrane-spanning stretches (helical) occupy residues 12 to 32, 36 to 56, 82 to 102, 115 to 135, 145 to 165, and 181 to 201; these read AVFV…FLAL, MEAA…TVPV, FLGL…LEMV, GVFL…LFMV, LVYG…LAGI, and LGIT…FSGI.

It belongs to the NqrDE/RnfAE family. Composed of six subunits; NqrA, NqrB, NqrC, NqrD, NqrE and NqrF.

It is found in the cell inner membrane. The enzyme catalyses a ubiquinone + n Na(+)(in) + NADH + H(+) = a ubiquinol + n Na(+)(out) + NAD(+). NQR complex catalyzes the reduction of ubiquinone-1 to ubiquinol by two successive reactions, coupled with the transport of Na(+) ions from the cytoplasm to the periplasm. NqrA to NqrE are probably involved in the second step, the conversion of ubisemiquinone to ubiquinol. The chain is Na(+)-translocating NADH-quinone reductase subunit E from Hahella chejuensis (strain KCTC 2396).